The chain runs to 304 residues: Sulfate adenylyltransferase subunit 2 2 (304 aa).

It belongs to the PAPS reductase family. CysD subfamily. In terms of assembly, heterodimer composed of CysD, the smaller subunit, and CysN.

The catalysed reaction is sulfate + ATP + H(+) = adenosine 5'-phosphosulfate + diphosphate. It participates in sulfur metabolism; hydrogen sulfide biosynthesis; sulfite from sulfate: step 1/3. Functionally, with CysN forms the ATP sulfurylase (ATPS) that catalyzes the adenylation of sulfate producing adenosine 5'-phosphosulfate (APS) and diphosphate, the first enzymatic step in sulfur assimilation pathway. APS synthesis involves the formation of a high-energy phosphoric-sulfuric acid anhydride bond driven by GTP hydrolysis by CysN coupled to ATP hydrolysis by CysD. In Marinobacter nauticus (strain ATCC 700491 / DSM 11845 / VT8) (Marinobacter aquaeolei), this protein is Sulfate adenylyltransferase subunit 2 2.